Here is a 494-residue protein sequence, read N- to C-terminus: Tripartite motif-containing protein 5 (494 aa).

Alanine 2 carries the post-translational modification N-acetylalanine. An RING-type zinc finger spans residues 15–59; sequence CPICLELLTEPLSLDCGHSFCQACITANHKESTLHQGERSCPLCR. Serine 86 carries the post-translational modification Phosphoserine. The B box-type zinc finger occupies 91–132; the sequence is QKVDHCARHGEKLLLFCQQDGNVICWLCERSQEHRGHHTFLV. Zn(2+)-binding residues include cysteine 96, histidine 99, cysteine 118, and histidine 124. A coiled-coil region spans residues 132-223; it reads VEEVAEKYQG…RLVQSESDMV (92 aa). The tract at residues 186 to 199 is required for interaction with GABARAP and for autophagy; sequence FKQLRDILDCEESK. In terms of domain architecture, B30.2/SPRY spans 280 to 494; the sequence is PDLKGMLQAF…LPMTLCSPSS (215 aa).

Belongs to the TRIM/RBCC family. As to quaternary structure, can form homodimers and homotrimers. In addition to lower-order dimerization, also exhibits a higher-order multimerization and both low- and high-order multimerizations are essential for its restriction activity. Interacts with BTBD1 and BTBD2. Interacts with PSMC4, PSMC5, PSMD7 and HSPA8/HSC70. Interacts (via B30.2/SPRY domain) with HSPA1A/B. Interacts with PSMC2, MAP3K7/TAK1, TAB2 and TAB3. Interacts with SQSTM1. Interacts with TRIM6 and TRIM34. Interacts with ULK1 (phosphorylated form), GABARAP, GABARAPL1, GABARAPL2, MAP1LC3A, MAP1LC3C and BECN1. Degraded in a proteasome-independent fashion in the absence of viral infection but in a proteasome-dependent fashion following exposure to restriction sensitive virus. In terms of processing, autoubiquitinated in a RING finger- and UBE2D2-dependent manner. Monoubiquitinated by TRIM21. Deubiquitinated by Yersinia YopJ. Ubiquitination may not lead to proteasomal degradation.

The protein localises to the cytoplasm. The protein resides in the nucleus. It carries out the reaction S-ubiquitinyl-[E2 ubiquitin-conjugating enzyme]-L-cysteine + [acceptor protein]-L-lysine = [E2 ubiquitin-conjugating enzyme]-L-cysteine + N(6)-ubiquitinyl-[acceptor protein]-L-lysine.. It functions in the pathway protein modification; protein ubiquitination. In terms of biological role, capsid-specific restriction factor that prevents infection from non-host-adapted retroviruses. Blocks viral replication early in the life cycle, after viral entry but before reverse transcription. In addition to acting as a capsid-specific restriction factor, also acts as a pattern recognition receptor that activates innate immune signaling in response to the retroviral capsid lattice. Binding to the viral capsid triggers its E3 ubiquitin ligase activity, and in concert with the heterodimeric ubiquitin conjugating enzyme complex UBE2V1-UBE2N (also known as UBC13-UEV1A complex) generates 'Lys-63'-linked polyubiquitin chains, which in turn are catalysts in the autophosphorylation of the MAP3K7/TAK1 complex (includes TAK1, TAB2, and TAB3). Activation of the MAP3K7/TAK1 complex by autophosphorylation results in the induction and expression of NF-kappa-B and MAPK-responsive inflammatory genes, thereby leading to an innate immune response in the infected cell. Plays a role in regulating autophagy through activation of autophagy regulator BECN1 by causing its dissociation from its inhibitors BCL2 and TAB2. This chain is Tripartite motif-containing protein 5 (TRIM5), found in Cebuella pygmaea (Pygmy marmoset).